A 350-amino-acid polypeptide reads, in one-letter code: Probable transposase-like protein At4g04430 (350 aa).

Disordered regions lie at residues 1-57 (MPSD…PSVN) and 307-328 (QIGQ…QVAN). A compositionally biased stretch (low complexity) spans 30 to 43 (SGVQGSGSRSGSTV).

It belongs to the transposase 24 family.

In Arabidopsis thaliana (Mouse-ear cress), this protein is Probable transposase-like protein At4g04430.